Reading from the N-terminus, the 92-residue chain is Kinetoplastid membrane protein 11B (92 aa).

The protein belongs to the KMP-11 family. As to quaternary structure, monomer.

The protein localises to the cytoplasm. The protein resides in the cytoskeleton. It is found in the cell projection. It localises to the cilium. Its subcellular location is the flagellum. Its function is as follows. May be involved in the regulation of the cytoskeleton through interaction with the subpellicular microtubules. May be involved in parasite mobility and attachment to the surface of the host cell. Behaves as a strong immunogen during infection. The chain is Kinetoplastid membrane protein 11B (KMP-11B) from Leishmania infantum.